Reading from the N-terminus, the 207-residue chain is Large ribosomal subunit protein uL4 (207 aa).

This sequence belongs to the universal ribosomal protein uL4 family. Part of the 50S ribosomal subunit.

One of the primary rRNA binding proteins, this protein initially binds near the 5'-end of the 23S rRNA. It is important during the early stages of 50S assembly. It makes multiple contacts with different domains of the 23S rRNA in the assembled 50S subunit and ribosome. In terms of biological role, forms part of the polypeptide exit tunnel. In Geobacter metallireducens (strain ATCC 53774 / DSM 7210 / GS-15), this protein is Large ribosomal subunit protein uL4.